A 260-amino-acid chain; its full sequence is Ubiquinone/menaquinone biosynthesis C-methyltransferase UbiE (260 aa).

Residues Thr-83, Asp-104, and 132–133 each bind S-adenosyl-L-methionine; that span reads NA.

This sequence belongs to the class I-like SAM-binding methyltransferase superfamily. MenG/UbiE family.

It carries out the reaction a 2-demethylmenaquinol + S-adenosyl-L-methionine = a menaquinol + S-adenosyl-L-homocysteine + H(+). The catalysed reaction is a 2-methoxy-6-(all-trans-polyprenyl)benzene-1,4-diol + S-adenosyl-L-methionine = a 5-methoxy-2-methyl-3-(all-trans-polyprenyl)benzene-1,4-diol + S-adenosyl-L-homocysteine + H(+). The protein operates within quinol/quinone metabolism; menaquinone biosynthesis; menaquinol from 1,4-dihydroxy-2-naphthoate: step 2/2. It functions in the pathway cofactor biosynthesis; ubiquinone biosynthesis. Functionally, methyltransferase required for the conversion of demethylmenaquinol (DMKH2) to menaquinol (MKH2) and the conversion of 2-polyprenyl-6-methoxy-1,4-benzoquinol (DDMQH2) to 2-polyprenyl-3-methyl-6-methoxy-1,4-benzoquinol (DMQH2). The protein is Ubiquinone/menaquinone biosynthesis C-methyltransferase UbiE of Bartonella quintana (strain Toulouse) (Rochalimaea quintana).